We begin with the raw amino-acid sequence, 146 residues long: Putative pre-16S rRNA nuclease (146 aa).

It belongs to the YqgF nuclease family.

Its subcellular location is the cytoplasm. In terms of biological role, could be a nuclease involved in processing of the 5'-end of pre-16S rRNA. This is Putative pre-16S rRNA nuclease from Paraburkholderia phytofirmans (strain DSM 17436 / LMG 22146 / PsJN) (Burkholderia phytofirmans).